A 465-amino-acid chain; its full sequence is Ribulose bisphosphate carboxylase large chain (465 aa).

An N6,N6,N6-trimethyllysine modification is found at K4. Substrate contacts are provided by N113 and T163. The active-site Proton acceptor is the K165. K167 provides a ligand contact to substrate. Positions 191, 193, and 194 each coordinate Mg(2+). K191 carries the N6-carboxylysine modification. Residue H284 is the Proton acceptor of the active site. Residues R285, H317, and S369 each coordinate substrate.

It belongs to the RuBisCO large chain family. Type I subfamily. Heterohexadecamer of 8 large chains and 8 small chains; disulfide-linked. The disulfide link is formed within the large subunit homodimers. It depends on Mg(2+) as a cofactor. Post-translationally, the disulfide bond which can form in the large chain dimeric partners within the hexadecamer appears to be associated with oxidative stress and protein turnover.

The protein localises to the plastid. It localises to the chloroplast. It catalyses the reaction 2 (2R)-3-phosphoglycerate + 2 H(+) = D-ribulose 1,5-bisphosphate + CO2 + H2O. The catalysed reaction is D-ribulose 1,5-bisphosphate + O2 = 2-phosphoglycolate + (2R)-3-phosphoglycerate + 2 H(+). Its function is as follows. RuBisCO catalyzes two reactions: the carboxylation of D-ribulose 1,5-bisphosphate, the primary event in carbon dioxide fixation, as well as the oxidative fragmentation of the pentose substrate in the photorespiration process. Both reactions occur simultaneously and in competition at the same active site. This Humiria balsamifera (Tauroniro) protein is Ribulose bisphosphate carboxylase large chain.